Here is a 119-residue protein sequence, read N- to C-terminus: Protein TusC (119 aa).

It belongs to the DsrF/TusC family. In terms of assembly, heterohexamer, formed by a dimer of trimers. The hexameric TusBCD complex contains 2 copies each of TusB, TusC and TusD. The TusBCD complex interacts with TusE.

It localises to the cytoplasm. Its function is as follows. Part of a sulfur-relay system required for 2-thiolation of 5-methylaminomethyl-2-thiouridine (mnm(5)s(2)U) at tRNA wobble positions. The protein is Protein TusC of Escherichia coli O157:H7.